A 112-amino-acid chain; its full sequence is Putative pterin-4-alpha-carbinolamine dehydratase (112 aa).

It belongs to the pterin-4-alpha-carbinolamine dehydratase family.

The enzyme catalyses (4aS,6R)-4a-hydroxy-L-erythro-5,6,7,8-tetrahydrobiopterin = (6R)-L-erythro-6,7-dihydrobiopterin + H2O. This Shewanella woodyi (strain ATCC 51908 / MS32) protein is Putative pterin-4-alpha-carbinolamine dehydratase.